Consider the following 266-residue polypeptide: NADH dehydrogenase [ubiquinone] iron-sulfur protein 3, mitochondrial (266 aa).

The N-terminal 38 residues, 1 to 38 (MAAAVAAAARGCWQRLVGSAAPARVAGRPSVLLLPVRR), are a transit peptide targeting the mitochondrion.

Belongs to the complex I 30 kDa subunit family. In terms of assembly, core subunit of respiratory chain NADH dehydrogenase (Complex I) which is composed of 45 different subunits. Interacts with NDUFAF3. Interacts with RAB5IF. Found in subcomplexes containing subunits NDUFS2, MT-ND1 and NDUFA13.

Its subcellular location is the mitochondrion inner membrane. The enzyme catalyses a ubiquinone + NADH + 5 H(+)(in) = a ubiquinol + NAD(+) + 4 H(+)(out). Its function is as follows. Core subunit of the mitochondrial membrane respiratory chain NADH dehydrogenase (Complex I) which catalyzes electron transfer from NADH through the respiratory chain, using ubiquinone as an electron acceptor. Essential for the catalytic activity and assembly of complex I. In Bos taurus (Bovine), this protein is NADH dehydrogenase [ubiquinone] iron-sulfur protein 3, mitochondrial (NDUFS3).